Reading from the N-terminus, the 288-residue chain is Eukaryotic translation initiation factor 3 subunit F-2 (288 aa).

An MPN domain is found at 12 to 149 (VLLHPLVLFQ…TRIFCAVATG (138 aa)).

The protein belongs to the eIF-3 subunit F family. As to quaternary structure, component of the eukaryotic translation initiation factor 3 (eIF-3) complex. The eIF-3 complex interacts with pix.

The protein resides in the cytoplasm. Component of the eukaryotic translation initiation factor 3 (eIF-3) complex, which is involved in protein synthesis of a specialized repertoire of mRNAs and, together with other initiation factors, stimulates binding of mRNA and methionyl-tRNAi to the 40S ribosome. The eIF-3 complex specifically targets and initiates translation of a subset of mRNAs involved in cell proliferation. The chain is Eukaryotic translation initiation factor 3 subunit F-2 from Drosophila persimilis (Fruit fly).